The primary structure comprises 731 residues: 1,4-alpha-glucan branching enzyme GlgB (731 aa).

Asp411 acts as the Nucleophile in catalysis. Glu464 acts as the Proton donor in catalysis.

This sequence belongs to the glycosyl hydrolase 13 family. GlgB subfamily. In terms of assembly, monomer.

The enzyme catalyses Transfers a segment of a (1-&gt;4)-alpha-D-glucan chain to a primary hydroxy group in a similar glucan chain.. It participates in glycan biosynthesis; glycogen biosynthesis. In terms of biological role, catalyzes the formation of the alpha-1,6-glucosidic linkages in glycogen by scission of a 1,4-alpha-linked oligosaccharide from growing alpha-1,4-glucan chains and the subsequent attachment of the oligosaccharide to the alpha-1,6 position. The protein is 1,4-alpha-glucan branching enzyme GlgB of Mycolicibacterium paratuberculosis (strain ATCC BAA-968 / K-10) (Mycobacterium paratuberculosis).